The following is a 351-amino-acid chain: Carbamoyl phosphate synthase small chain (351 aa).

Residues 1–171 (MKGIIYLEDG…IIHIAGNGNK (171 aa)) are CPSase. Residues serine 45, glycine 219, and glycine 221 each contribute to the L-glutamine site. The region spanning 171–351 (KVAVMDFGIK…TYLFDQFVNL (181 aa)) is the Glutamine amidotransferase type-1 domain. The active-site Nucleophile is the cysteine 246. L-glutamine-binding residues include leucine 247, glutamine 250, asparagine 288, glycine 290, and tyrosine 291. Residues histidine 331 and glutamate 333 contribute to the active site.

It belongs to the CarA family. Composed of two chains; the small (or glutamine) chain promotes the hydrolysis of glutamine to ammonia, which is used by the large (or ammonia) chain to synthesize carbamoyl phosphate. Tetramer of heterodimers (alpha,beta)4.

It catalyses the reaction hydrogencarbonate + L-glutamine + 2 ATP + H2O = carbamoyl phosphate + L-glutamate + 2 ADP + phosphate + 2 H(+). The enzyme catalyses L-glutamine + H2O = L-glutamate + NH4(+). It participates in amino-acid biosynthesis; L-arginine biosynthesis; carbamoyl phosphate from bicarbonate: step 1/1. The protein operates within pyrimidine metabolism; UMP biosynthesis via de novo pathway; (S)-dihydroorotate from bicarbonate: step 1/3. Its function is as follows. Small subunit of the glutamine-dependent carbamoyl phosphate synthetase (CPSase). CPSase catalyzes the formation of carbamoyl phosphate from the ammonia moiety of glutamine, carbonate, and phosphate donated by ATP, constituting the first step of 2 biosynthetic pathways, one leading to arginine and/or urea and the other to pyrimidine nucleotides. The small subunit (glutamine amidotransferase) binds and cleaves glutamine to supply the large subunit with the substrate ammonia. This is Carbamoyl phosphate synthase small chain from Clostridium acetobutylicum (strain ATCC 824 / DSM 792 / JCM 1419 / IAM 19013 / LMG 5710 / NBRC 13948 / NRRL B-527 / VKM B-1787 / 2291 / W).